Consider the following 301-residue polypeptide: Pyridoxal 5'-phosphate synthase subunit Pdx1 (301 aa).

A D-ribose 5-phosphate-binding site is contributed by Asp-26. Lys-83 acts as the Schiff-base intermediate with D-ribose 5-phosphate in catalysis. Gly-155 contributes to the D-ribose 5-phosphate binding site. Residue Arg-167 coordinates D-glyceraldehyde 3-phosphate. Residues Gly-216 and 237–238 (GS) each bind D-ribose 5-phosphate.

This sequence belongs to the PdxS/SNZ family. Homohexamer and homododecamer. In the presence of Pdx2, forms a dodecamer of heterodimers.

The protein resides in the cytoplasm. The catalysed reaction is aldehydo-D-ribose 5-phosphate + D-glyceraldehyde 3-phosphate + L-glutamine = pyridoxal 5'-phosphate + L-glutamate + phosphate + 3 H2O + H(+). Its pathway is cofactor biosynthesis; pyridoxal 5'-phosphate biosynthesis. In terms of biological role, catalyzes the formation of pyridoxal 5'-phosphate from ribose 5-phosphate (RBP), glyceraldehyde 3-phosphate (G3P) and ammonia. The ammonia is provided by Pdx2. Can also use ribulose 5-phosphate and dihydroxyacetone phosphate as substrates, resulting from enzyme-catalyzed isomerization of RBP and G3P, respectively. The sequence is that of Pyridoxal 5'-phosphate synthase subunit Pdx1 (pdx1) from Plasmodium falciparum (isolate 3D7).